Here is a 708-residue protein sequence, read N- to C-terminus: Ubiquitin thioesterase ZRANB1 (708 aa).

The RanBP2-type 1 zinc finger occupies 3–33 (ERGIKWACEYCTYENWPSAIKCTMCRAQRPS). Positions 10, 13, 24, and 27 each coordinate Zn(2+). The segment at 38 to 73 (TEDPFKSGSSDVGRDWDPSSTEGGSSPLICPDSSAR) is disordered. 2 consecutive RanBP2-type zinc fingers follow at residues 84–113 (NANK…QRRT) and 149–178 (RTQH…PRPN). Zn(2+) contacts are provided by Cys90, Cys93, Cys104, Cys107, Cys155, Cys158, Cys169, and Cys172. The segment at 200–225 (RARWRGSCSSGNSQRRSPPATKRDSE) is disordered. The span at 206–215 (SCSSGNSQRR) shows a compositional bias: polar residues. ANK repeat units lie at residues 260–290 (KKTD…SGGD) and 313–340 (YTLV…QQAA). The interval 392 to 641 (PTVQEKLFDE…LSAQELGNEE (250 aa)) is TRAF-binding. An OTU domain is found at 432-592 (LYALWNRTAG…RGHFSALVAM (161 aa)). The active-site Nucleophile is Cys443. His585 acts as the Proton acceptor in catalysis.

The protein belongs to the peptidase C64 family. As to quaternary structure, interacts with TRAF6. Interacts with APC. Widely expressed.

Its subcellular location is the cytoplasm. The protein resides in the nucleus. The enzyme catalyses Thiol-dependent hydrolysis of ester, thioester, amide, peptide and isopeptide bonds formed by the C-terminal Gly of ubiquitin (a 76-residue protein attached to proteins as an intracellular targeting signal).. Functionally, ubiquitin thioesterase, which specifically hydrolyzes 'Lys-29'-linked and 'Lys-33'-linked diubiquitin. Also cleaves 'Lys-63'-linked chains, but with 40-fold less efficiency compared to 'Lys-29'-linked ones. Positive regulator of the Wnt signaling pathway that deubiquitinates APC protein, a negative regulator of Wnt-mediated transcription. Acts as a regulator of autophagy by mediating deubiquitination of PIK3C3/VPS34, thereby promoting autophagosome maturation. Plays a role in the regulation of cell morphology and cytoskeletal organization. Required in the stress fiber dynamics and cell migration. In Homo sapiens (Human), this protein is Ubiquitin thioesterase ZRANB1.